The following is a 147-amino-acid chain: Large ribosomal subunit protein bL9 (147 aa).

It belongs to the bacterial ribosomal protein bL9 family.

Functionally, binds to the 23S rRNA. This is Large ribosomal subunit protein bL9 from Campylobacter jejuni subsp. jejuni serotype O:23/36 (strain 81-176).